A 391-amino-acid chain; its full sequence is Formate-dependent phosphoribosylglycinamide formyltransferase (391 aa).

N(1)-(5-phospho-beta-D-ribosyl)glycinamide is bound by residues 18 to 19 (EL) and Glu78. Residues Arg110, Lys151, 156-161 (SSGKGQ), 191-194 (EEFI), and Glu199 each bind ATP. The ATP-grasp domain maps to 115–305 (ELAHEELGIR…EFELHLRAIL (191 aa)). Residues Glu264 and Glu276 each coordinate Mg(2+). Residues Asp283, Lys353, and 360-361 (RR) each bind N(1)-(5-phospho-beta-D-ribosyl)glycinamide.

Belongs to the PurK/PurT family. As to quaternary structure, homodimer.

It catalyses the reaction N(1)-(5-phospho-beta-D-ribosyl)glycinamide + formate + ATP = N(2)-formyl-N(1)-(5-phospho-beta-D-ribosyl)glycinamide + ADP + phosphate + H(+). It functions in the pathway purine metabolism; IMP biosynthesis via de novo pathway; N(2)-formyl-N(1)-(5-phospho-D-ribosyl)glycinamide from N(1)-(5-phospho-D-ribosyl)glycinamide (formate route): step 1/1. Its function is as follows. Involved in the de novo purine biosynthesis. Catalyzes the transfer of formate to 5-phospho-ribosyl-glycinamide (GAR), producing 5-phospho-ribosyl-N-formylglycinamide (FGAR). Formate is provided by PurU via hydrolysis of 10-formyl-tetrahydrofolate. This is Formate-dependent phosphoribosylglycinamide formyltransferase from Trichormus variabilis (strain ATCC 29413 / PCC 7937) (Anabaena variabilis).